Consider the following 1644-residue polypeptide: Peroxisome proliferator-activated receptor gamma coactivator-related protein 1 (1644 aa).

Disordered stretches follow at residues 1 to 61, 170 to 249, 429 to 616, 646 to 761, 773 to 884, 978 to 1074, and 1322 to 1507; these read MAAR…DSSF, PERD…EVAG, LTPK…TSPV, AADP…PETP, SAPA…QPPG, STVS…EGVV, and AAPP…NDHY. Pro residues predominate over residues 12-22; that stretch reads APPPTGGPGPD. Over residues 213-222 the composition is skewed to low complexity; sequence SSPKLPSWRP. The residue at position 232 (serine 232) is a Phosphoserine. The necessary for interaction with CREB1 and NRF1 and for transcriptional coactivation stretch occupies residues 425–460; it reads IMESLTPKEPQSLPASASQGSQKVPRKGRKKKNKEQ. The segment covering 437–446 has biased composition (polar residues); that stretch reads LPASASQGSQ. The span at 448-457 shows a compositional bias: basic residues; sequence VPRKGRKKKN. Over residues 475–496 the composition is skewed to polar residues; the sequence is SSRGQSTVSAEVNSQAGSSQKQ. The segment covering 515–524 has biased composition (low complexity); sequence RAWARAWAAA. Serine 541 is subject to Phosphoserine. The span at 556-572 shows a compositional bias: polar residues; it reads ETSQANPTLSLNDSAQA. Residues 691 to 702 show a composition bias toward basic and acidic residues; the sequence is DHPKVVSPEGKD. Polar residues predominate over residues 811–821; sequence MVSTHSEQVSS. Pro residues-rich tracts occupy residues 828–864 and 874–884; these read VRPP…PLLP and RLPPPPLQPPG. 3 positions are modified to phosphoserine: serine 1059, serine 1393, and serine 1395. Positions 1361-1432 are necessary for interaction with CREB1 and NRF1; the sequence is EASPCRSEMN…SSSSSVSSSS (72 aa). Low complexity-rich tracts occupy residues 1409 to 1433 and 1453 to 1489; these read SRSV…SSSR and SSCS…VSPC. Residues 1523–1599 enclose the RRM domain; the sequence is RVVFIGKIPG…QPFDLCFGGR (77 aa).

Interacts with CREB1 and NRF1. Expressed in liver, heart, skeletal muscle, kidney and white and brown adipose tissues.

The protein localises to the nucleus. In terms of biological role, acts as a coactivator during transcriptional activation of nuclear genes related to mitochondrial biogenesis and cell growth. Involved in the transcription coactivation of CREB and NRF1 target genes. This chain is Peroxisome proliferator-activated receptor gamma coactivator-related protein 1 (Pprc1), found in Mus musculus (Mouse).